The primary structure comprises 453 residues: Trigger factor (453 aa).

Positions 171–256 constitute a PPIase FKBP-type domain; that stretch reads GDRITISFKG…VSLIEAPEEL (86 aa).

It belongs to the FKBP-type PPIase family. Tig subfamily.

The protein resides in the cytoplasm. The catalysed reaction is [protein]-peptidylproline (omega=180) = [protein]-peptidylproline (omega=0). In terms of biological role, involved in protein export. Acts as a chaperone by maintaining the newly synthesized protein in an open conformation. Functions as a peptidyl-prolyl cis-trans isomerase. The chain is Trigger factor from Nitrobacter winogradskyi (strain ATCC 25391 / DSM 10237 / CIP 104748 / NCIMB 11846 / Nb-255).